The following is a 94-amino-acid chain: Co-chaperonin GroES (94 aa).

The protein belongs to the GroES chaperonin family. As to quaternary structure, heptamer of 7 subunits arranged in a ring. Interacts with the chaperonin GroEL.

It localises to the cytoplasm. Its function is as follows. Together with the chaperonin GroEL, plays an essential role in assisting protein folding. The GroEL-GroES system forms a nano-cage that allows encapsulation of the non-native substrate proteins and provides a physical environment optimized to promote and accelerate protein folding. GroES binds to the apical surface of the GroEL ring, thereby capping the opening of the GroEL channel. The polypeptide is Co-chaperonin GroES (Clostridium botulinum (strain Eklund 17B / Type B)).